Reading from the N-terminus, the 82-residue chain is RNA-binding protein GTNG_0100 (82 aa).

Belongs to the eukaryotic ribosomal protein eL8 family.

This chain is RNA-binding protein GTNG_0100, found in Geobacillus thermodenitrificans (strain NG80-2).